Consider the following 153-residue polypeptide: Small ribosomal subunit protein uS5 (153 aa).

Positions 15-78 (FQEVVVNIGR…DDAFKNLIHV (64 aa)) constitute an S5 DRBM domain.

The protein belongs to the universal ribosomal protein uS5 family. As to quaternary structure, part of the 30S ribosomal subunit. Contacts proteins S4 and S8.

In terms of biological role, with S4 and S12 plays an important role in translational accuracy. Its function is as follows. Located at the back of the 30S subunit body where it stabilizes the conformation of the head with respect to the body. In Helicobacter pylori (strain P12), this protein is Small ribosomal subunit protein uS5.